The sequence spans 211 residues: MVIKKVNLDIVVGVTSTLPETPFPEVAFAGKSNVGKSSLINALMNRKSYARTSSQPGKTQTINFYNINDSMYLVDLPGYGYANVSPAVKAKWGKMIEKYLRKSSQLKQVFLLIDIRHDPSDNDRMMYDWIVNNGYRPVIVATKLDKIKRSQISKQVKAVRTGLGLRQEDILIPFSSQTKQGLKELWQLIDSYVLPQEENETDSESAAIIQE.

In terms of domain architecture, EngB-type G spans 22–195 (PFPEVAFAGK…WQLIDSYVLP (174 aa)). GTP contacts are provided by residues 30–37 (GKSNVGKS), 57–61 (GKTQT), 75–78 (DLPG), 142–145 (TKLD), and 174–176 (FSS). The Mg(2+) site is built by serine 37 and threonine 59.

This sequence belongs to the TRAFAC class TrmE-Era-EngA-EngB-Septin-like GTPase superfamily. EngB GTPase family. It depends on Mg(2+) as a cofactor.

In terms of biological role, necessary for normal cell division and for the maintenance of normal septation. The chain is Probable GTP-binding protein EngB from Lachnospira eligens (strain ATCC 27750 / DSM 3376 / VPI C15-48 / C15-B4) (Eubacterium eligens).